We begin with the raw amino-acid sequence, 192 residues long: Group XIIA secretory phospholipase A2 (192 aa).

The first 25 residues, 1 to 25 (MVTPRPAPARSPALLLLLLLATARG), serve as a signal peptide directing secretion. Residues Gly-91, Pro-93, and Phe-95 each coordinate Ca(2+). His-113 is a catalytic residue. Residue Asp-114 participates in Ca(2+) binding. Residue Asp-128 is part of the active site.

The protein belongs to the phospholipase A2 family. Requires Ca(2+) as cofactor.

Its subcellular location is the secreted. It is found in the cytoplasm. The catalysed reaction is a 1,2-diacyl-sn-glycero-3-phosphocholine + H2O = a 1-acyl-sn-glycero-3-phosphocholine + a fatty acid + H(+). In terms of biological role, PA2 catalyzes the calcium-dependent hydrolysis of the 2-acyl groups in 3-sn-phosphoglycerides. Does not exhibit detectable activity toward sn-2-arachidonoyl- or linoleoyl-phosphatidylcholine or -phosphatidylethanolamine. This chain is Group XIIA secretory phospholipase A2 (Pla2g12a), found in Mus musculus (Mouse).